The primary structure comprises 553 residues: Zinc finger protein Elbow (553 aa).

2 disordered regions span residues 59 to 243 and 388 to 407; these read STKQ…MHSP and GGGG…SGGS. 2 stretches are compositionally biased toward low complexity: residues 96 to 110 and 121 to 134; these read SPVS…TGSV and SSSS…TFKP. 3 stretches are compositionally biased toward polar residues: residues 137–146, 153–173, and 224–236; these read PNNNISNITT, TNLS…KSMT, and TAST…NSKE. The segment at 287–480 is self-association; sequence SASAAAAAAS…PDAVLSAAAA (194 aa). The interval 287 to 553 is interaction with noc; sequence SASAAAAAAS…YGPRMGSSHP (267 aa). Positions 388–406 are enriched in gly residues; it reads GGGGGGSSKSSGSQGGSGG. The segment at 437–466 adopts a C2H2-type zinc-finger fold; the sequence is YVCSWIGSDAAYCGKRFGTSDDLFQHLRTH.

Belongs to the Elbow/Noc family. Self-associates. Interacts with gro and noc.

Its function is as follows. May negatively regulate Notch-induced cell proliferation in the eye-head primordium. May act in leg and wing primordia to negatively regulate body-wall specifying genes and thereby promote appendage formation. Required for tracheal development. The polypeptide is Zinc finger protein Elbow (elB) (Drosophila melanogaster (Fruit fly)).